We begin with the raw amino-acid sequence, 298 residues long: Mitochondrial distribution and morphology protein 12 (298 aa).

In terms of domain architecture, SMP-LTD spans 1 to 298 (MSIELDWTGL…VYPHFYTLYL (298 aa)). The interval 118-142 (SEHEESLSRWSDTESETGTCDSSSL) is disordered. A compositionally biased stretch (polar residues) spans 133-142 (ETGTCDSSSL).

The protein belongs to the MDM12 family. As to quaternary structure, component of the ER-mitochondria encounter structure (ERMES) or MDM complex, composed of MMM1, MDM10, MDM12 and MDM34. An MMM1 homodimer associates with one molecule of MDM12 on each side in a pairwise head-to-tail manner, and the SMP-LTD domains of MMM1 and MDM12 generate a continuous hydrophobic tunnel for phospholipid trafficking.

It localises to the mitochondrion outer membrane. Its subcellular location is the endoplasmic reticulum membrane. In terms of biological role, component of the ERMES/MDM complex, which serves as a molecular tether to connect the endoplasmic reticulum (ER) and mitochondria. Components of this complex are involved in the control of mitochondrial shape and protein biogenesis, and function in nonvesicular lipid trafficking between the ER and mitochondria. MDM12 is required for the interaction of the ER-resident membrane protein MMM1 and the outer mitochondrial membrane-resident beta-barrel protein MDM10. The MDM12-MMM1 subcomplex functions in the major beta-barrel assembly pathway that is responsible for biogenesis of all mitochondrial outer membrane beta-barrel proteins, and acts in a late step after the SAM complex. The MDM10-MDM12-MMM1 subcomplex further acts in the TOM40-specific pathway after the action of the MDM12-MMM1 complex. Essential for establishing and maintaining the structure of mitochondria and maintenance of mtDNA nucleoids. This is Mitochondrial distribution and morphology protein 12 from Malassezia globosa (strain ATCC MYA-4612 / CBS 7966) (Dandruff-associated fungus).